The sequence spans 619 residues: Keratin, type II cytoskeletal 1 (619 aa).

The tract at residues 1 to 180 (MSRHFSSRSG…DPEIQKVKTR (180 aa)) is head. Arginine 12 bears the Omega-N-methylarginine mark. Phosphoserine occurs at positions 18 and 21. Positions 28 to 49 (QRRTTSSSVRHSGGGGGRFSGG) are disordered. Gly residues predominate over residues 39-49 (SGGGGGRFSGG). Arginine 45 bears the Omega-N-methylarginine mark. The residue at position 68 (serine 68) is a Phosphoserine. Positions 173–477 (EIQKVKTRER…ELMNTKLALD (305 aa)) form a coiled coil. Residues 181–216 (EREQIKSLNNQFASFIDKVRFLEQQNQVLQTKWELL) form a coil 1A region. The IF rod domain maps to 181-494 (EREQIKSLNN…TLLEGEESRM (314 aa)). The linker 1 stretch occupies residues 217–235 (QQVDTSTRTHSLEPYFENY). Residues 236-327 (ISNLRRRVDQ…TLYQAELSQM (92 aa)) form a coil 1B region. Lysine 277 is modified (N6,N6-dimethyllysine). Positions 328-351 (QTQISETNVILSMDNNRSLDLDSI) are linker 12. Residue serine 345 is modified to Phosphoserine. Residues 352 to 490 (ISEVKAQYEE…ATYRTLLEGE (139 aa)) are coil 2. Positions 491–619 (ESRMSGECAP…VSTSYSRAVR (129 aa)) are tail. An omega-N-methylarginine mark is found at arginine 519 and arginine 575. The interval 559-619 (GGGGGGYGSS…VSTSYSRAVR (61 aa)) is disordered. Residues 573 to 595 (GHRGGSGGGSRSGGSSGGRGSSS) are compositionally biased toward gly residues. The segment covering 596 to 606 (GGIKTSSGSSS) has biased composition (low complexity). Residues 607 to 619 (VKFVSTSYSRAVR) are compositionally biased toward polar residues.

The protein belongs to the intermediate filament family. In terms of assembly, heterotetramer of two type I and two type II keratins. Heterodimer with KRT10. Two heterodimers of KRT1 and KRT10 form a heterotetramer. Forms a heterodimer with KRT14; the interaction is more abundant in the absence of KRT5. Interacts with ITGB1 in the presence of RACK1 and SRC, and with RACK1. Interacts with C1QBP; the association represents a cell surface kininogen receptor. Interacts with EPPK1; interaction is dependent of higher-order structure of intermediate filament. Undergoes deimination of some arginine residues (citrullination).

Its subcellular location is the cell membrane. The protein localises to the cytoplasm. Its function is as follows. May regulate the activity of kinases such as PKC and SRC via binding to integrin beta-1 (ITB1) and the receptor of activated protein C kinase 1 (RACK1). In complex with C1QBP is a high affinity receptor for kininogen-1/HMWK. This chain is Keratin, type II cytoskeletal 1, found in Canis lupus familiaris (Dog).